Reading from the N-terminus, the 1126-residue chain is [F-actin]-monooxygenase mical2 (1126 aa).

The interval 2-494 is monooxygenase domain; sequence GENGDDKHGR…KHLFITNELQ (493 aa). Residues cysteine 97, 116–118, 123–125, phenylalanine 183, tyrosine 299, and aspartate 399 contribute to the FAD site; these read EKR and RNN. The 104-residue stretch at 516 to 619 folds into the Calponin-homology (CH) domain; sequence DVRPNKLLIW…MVLYLSKFYE (104 aa). The Nuclear localization signal motif lies at 659 to 680; sequence RKRVPKDEKTSDDSDLNKRRKT. Disordered regions lie at residues 748-830 and 892-935; these read AVTA…SLSS and PSLG…SGMS. The span at 792 to 803 shows a compositional bias: pro residues; the sequence is VRPPVQPRPGPA. The span at 805–824 shows a compositional bias: basic and acidic residues; sequence PTRELRVVERAQSHPDDLGR. Residues 918–932 show a composition bias toward low complexity; the sequence is SSSDSSPSSAPSRKS. Positions 1001–1063 constitute an LIM zinc-binding domain; the sequence is DTCYFCKRRV…QPHFMHSVTK (63 aa). Zn(2+)-binding residues include cysteine 1003, cysteine 1006, histidine 1024, cysteine 1027, cysteine 1030, cysteine 1033, cysteine 1053, and histidine 1056.

This sequence belongs to the Mical family. The cofactor is FAD.

The protein localises to the nucleus. It is found in the cytoplasm. It carries out the reaction L-methionyl-[F-actin] + NADPH + O2 + H(+) = L-methionyl-(R)-S-oxide-[F-actin] + NADP(+) + H2O. Functionally, nuclear monooxygenase that promotes depolymerization of F-actin by mediating oxidation of specific methionine residues on actin and regulates the srf signaling. Acts by modifying nuclear actin subunits through the addition of oxygen to form methionine-sulfoxide, leading to promote actin filament severing and prevent repolymerization. Acts as a key regulator of the srf signaling pathway elicited by nerve growth factor and serum: mediates oxidation and subsequent depolymerization of nuclear actin, leading to increase mkl1/mrtf-a presence in the nucleus and promote srf:mkl1/mrtf-a-dependent gene transcription. The sequence is that of [F-actin]-monooxygenase mical2 from Xenopus tropicalis (Western clawed frog).